Reading from the N-terminus, the 461-residue chain is tRNA modification GTPase MnmE (461 aa).

Residues Arg-22, Glu-87, and Arg-126 each contribute to the (6S)-5-formyl-5,6,7,8-tetrahydrofolate site. In terms of domain architecture, TrmE-type G spans 223-382 (GLSTVILGRP…LEEAIAALFF (160 aa)). Residue Asn-233 participates in K(+) binding. GTP contacts are provided by residues 233–238 (NVGKSS), 252–258 (TDIAGTT), and 277–280 (DTAG). Ser-237 provides a ligand contact to Mg(2+). The K(+) site is built by Thr-252, Ile-254, and Thr-257. Thr-258 provides a ligand contact to Mg(2+). Lys-461 provides a ligand contact to (6S)-5-formyl-5,6,7,8-tetrahydrofolate.

Belongs to the TRAFAC class TrmE-Era-EngA-EngB-Septin-like GTPase superfamily. TrmE GTPase family. Homodimer. Heterotetramer of two MnmE and two MnmG subunits. K(+) serves as cofactor.

The protein localises to the cytoplasm. In terms of biological role, exhibits a very high intrinsic GTPase hydrolysis rate. Involved in the addition of a carboxymethylaminomethyl (cmnm) group at the wobble position (U34) of certain tRNAs, forming tRNA-cmnm(5)s(2)U34. The polypeptide is tRNA modification GTPase MnmE (Lysinibacillus sphaericus (strain C3-41)).